A 318-amino-acid polypeptide reads, in one-letter code: Homoserine kinase (318 aa).

97–107 contributes to the ATP binding site; it reads PIGSGLGSSAC.

It belongs to the GHMP kinase family. Homoserine kinase subfamily.

It localises to the cytoplasm. The catalysed reaction is L-homoserine + ATP = O-phospho-L-homoserine + ADP + H(+). The protein operates within amino-acid biosynthesis; L-threonine biosynthesis; L-threonine from L-aspartate: step 4/5. Its function is as follows. Catalyzes the ATP-dependent phosphorylation of L-homoserine to L-homoserine phosphate. The protein is Homoserine kinase of Aliivibrio salmonicida (strain LFI1238) (Vibrio salmonicida (strain LFI1238)).